We begin with the raw amino-acid sequence, 193 residues long: Potassium-transporting ATPase KdpC subunit (193 aa).

Residues 7 to 27 (PMIVIFAVLAALTGLAYPAVM) traverse the membrane as a helical segment.

This sequence belongs to the KdpC family. In terms of assembly, the system is composed of three essential subunits: KdpA, KdpB and KdpC.

The protein resides in the cell inner membrane. In terms of biological role, part of the high-affinity ATP-driven potassium transport (or Kdp) system, which catalyzes the hydrolysis of ATP coupled with the electrogenic transport of potassium into the cytoplasm. This subunit acts as a catalytic chaperone that increases the ATP-binding affinity of the ATP-hydrolyzing subunit KdpB by the formation of a transient KdpB/KdpC/ATP ternary complex. In Paraburkholderia phymatum (strain DSM 17167 / CIP 108236 / LMG 21445 / STM815) (Burkholderia phymatum), this protein is Potassium-transporting ATPase KdpC subunit.